The primary structure comprises 556 residues: Dihydroxy-acid dehydratase (556 aa).

Cysteine 47 lines the [2Fe-2S] cluster pocket. Aspartate 79 is a binding site for Mg(2+). Cysteine 120 contacts [2Fe-2S] cluster. Positions 121 and 122 each coordinate Mg(2+). An N6-carboxylysine modification is found at lysine 122. Cysteine 192 is a [2Fe-2S] cluster binding site. Glutamate 444 lines the Mg(2+) pocket. The Proton acceptor role is filled by serine 470.

It belongs to the IlvD/Edd family. As to quaternary structure, homodimer. [2Fe-2S] cluster is required as a cofactor. Requires Mg(2+) as cofactor.

The enzyme catalyses (2R)-2,3-dihydroxy-3-methylbutanoate = 3-methyl-2-oxobutanoate + H2O. It catalyses the reaction (2R,3R)-2,3-dihydroxy-3-methylpentanoate = (S)-3-methyl-2-oxopentanoate + H2O. Its pathway is amino-acid biosynthesis; L-isoleucine biosynthesis; L-isoleucine from 2-oxobutanoate: step 3/4. It functions in the pathway amino-acid biosynthesis; L-valine biosynthesis; L-valine from pyruvate: step 3/4. In terms of biological role, functions in the biosynthesis of branched-chain amino acids. Catalyzes the dehydration of (2R,3R)-2,3-dihydroxy-3-methylpentanoate (2,3-dihydroxy-3-methylvalerate) into 2-oxo-3-methylpentanoate (2-oxo-3-methylvalerate) and of (2R)-2,3-dihydroxy-3-methylbutanoate (2,3-dihydroxyisovalerate) into 2-oxo-3-methylbutanoate (2-oxoisovalerate), the penultimate precursor to L-isoleucine and L-valine, respectively. The chain is Dihydroxy-acid dehydratase from Prochlorococcus marinus (strain MIT 9313).